The following is a 208-amino-acid chain: Uracil phosphoribosyltransferase (208 aa).

5-phospho-alpha-D-ribose 1-diphosphate contacts are provided by residues Arg-78, Arg-103, and 130 to 138 (DPMLATGGS). Residues Ile-193 and 198–200 (GDA) contribute to the uracil site. Asp-199 provides a ligand contact to 5-phospho-alpha-D-ribose 1-diphosphate.

Belongs to the UPRTase family. Mg(2+) serves as cofactor.

It catalyses the reaction UMP + diphosphate = 5-phospho-alpha-D-ribose 1-diphosphate + uracil. The protein operates within pyrimidine metabolism; UMP biosynthesis via salvage pathway; UMP from uracil: step 1/1. With respect to regulation, allosterically activated by GTP. In terms of biological role, catalyzes the conversion of uracil and 5-phospho-alpha-D-ribose 1-diphosphate (PRPP) to UMP and diphosphate. This Yersinia enterocolitica serotype O:8 / biotype 1B (strain NCTC 13174 / 8081) protein is Uracil phosphoribosyltransferase.